The following is a 576-amino-acid chain: MKSQTQAPLVVEGKLSDSERMKKESNFLRGTISDDLQNGLTGGFEGDNFLLIRFHGMYQQDDRDIRAERAQQLLEPRHAMMLRCRLPGGVITPKQWLSIDKFASENTLYGSIRITNRQTFQFHGILKGHVKPAHQMLASTGLDALATANDVNRNVLCTSNPEQSSLHQEAYEWAKKLSEHLLPRTHAYAEIWLDKEKVATTDEEPILGETYLPRKFKTSVVIPPYNDVDLHANDMNFIAIAENGHLVGFNVLVGGGLAMTHGDKKTFPRLASEFGYIPIDKTLAVAEAIVTTQRDWGNRTERKNAKTKYTLERVGIETFKQEVERRSGVMFDMIRPYQFTHRGDQIGWLKGVDNKWYLTLFIESGRLIDKPNAPLKTGVAEIAKVHLGDFRLTANQNLIVAGVPEAQKEQIEAIARQYGLINDEVTPLRKHAMACVSFPTCPLAMAEAERFLPAFTDTLDNIMAKYGVSDEHIVVRVTGCPNGCGRAMLAEVGLVGKAPDRYNLHLGGNRMGTRIPRMYRENISSQEIIEILDTLIGQWAISRELNEGFGDFLIRTDVIKPVVNSAIDFYEVQEVI.

Positions 435, 441, 480, and 484 each coordinate [4Fe-4S] cluster. Cysteine 484 is a siroheme binding site.

It belongs to the nitrite and sulfite reductase 4Fe-4S domain family. As to quaternary structure, alpha(8)-beta(8). The alpha component is a flavoprotein, the beta component is a hemoprotein. Siroheme serves as cofactor. Requires [4Fe-4S] cluster as cofactor.

It catalyses the reaction hydrogen sulfide + 3 NADP(+) + 3 H2O = sulfite + 3 NADPH + 4 H(+). Its pathway is sulfur metabolism; hydrogen sulfide biosynthesis; hydrogen sulfide from sulfite (NADPH route): step 1/1. Its function is as follows. Component of the sulfite reductase complex that catalyzes the 6-electron reduction of sulfite to sulfide. This is one of several activities required for the biosynthesis of L-cysteine from sulfate. This is Sulfite reductase [NADPH] hemoprotein beta-component from Proteus mirabilis (strain HI4320).